The following is a 329-amino-acid chain: Holliday junction branch migration complex subunit RuvB (329 aa).

Residues 1 to 20 (MSRILEGDPVEGEKSWENEL) are disordered. The large ATPase domain (RuvB-L) stretch occupies residues 1-181 (MSRILEGDPV…FGIVERLQFY (181 aa)). The span at 11-20 (EGEKSWENEL) shows a compositional bias: basic and acidic residues. Residues leucine 20, arginine 21, glycine 62, lysine 65, threonine 66, threonine 67, 128 to 130 (EDY), arginine 171, tyrosine 181, and arginine 218 each bind ATP. Threonine 66 is a binding site for Mg(2+). The small ATPAse domain (RuvB-S) stretch occupies residues 182 to 252 (DKDALRQILM…IAVYALNQLG (71 aa)). Positions 255–329 (QYGLDLMDRR…FAKSSVLADK (75 aa)) are head domain (RuvB-H). DNA-binding residues include arginine 291, lysine 310, and arginine 315.

Belongs to the RuvB family. Homohexamer. Forms an RuvA(8)-RuvB(12)-Holliday junction (HJ) complex. HJ DNA is sandwiched between 2 RuvA tetramers; dsDNA enters through RuvA and exits via RuvB. An RuvB hexamer assembles on each DNA strand where it exits the tetramer. Each RuvB hexamer is contacted by two RuvA subunits (via domain III) on 2 adjacent RuvB subunits; this complex drives branch migration. In the full resolvosome a probable DNA-RuvA(4)-RuvB(12)-RuvC(2) complex forms which resolves the HJ.

It localises to the cytoplasm. The catalysed reaction is ATP + H2O = ADP + phosphate + H(+). Functionally, the RuvA-RuvB-RuvC complex processes Holliday junction (HJ) DNA during genetic recombination and DNA repair, while the RuvA-RuvB complex plays an important role in the rescue of blocked DNA replication forks via replication fork reversal (RFR). RuvA specifically binds to HJ cruciform DNA, conferring on it an open structure. The RuvB hexamer acts as an ATP-dependent pump, pulling dsDNA into and through the RuvAB complex. RuvB forms 2 homohexamers on either side of HJ DNA bound by 1 or 2 RuvA tetramers; 4 subunits per hexamer contact DNA at a time. Coordinated motions by a converter formed by DNA-disengaged RuvB subunits stimulates ATP hydrolysis and nucleotide exchange. Immobilization of the converter enables RuvB to convert the ATP-contained energy into a lever motion, pulling 2 nucleotides of DNA out of the RuvA tetramer per ATP hydrolyzed, thus driving DNA branch migration. The RuvB motors rotate together with the DNA substrate, which together with the progressing nucleotide cycle form the mechanistic basis for DNA recombination by continuous HJ branch migration. Branch migration allows RuvC to scan DNA until it finds its consensus sequence, where it cleaves and resolves cruciform DNA. The chain is Holliday junction branch migration complex subunit RuvB from Bdellovibrio bacteriovorus (strain ATCC 15356 / DSM 50701 / NCIMB 9529 / HD100).